Here is a 118-residue protein sequence, read N- to C-terminus: uncharacterized protein (118 aa).

The protein belongs to the transposase IS3/IS150/IS904 family.

This is an uncharacterized protein from Haemophilus influenzae (strain ATCC 51907 / DSM 11121 / KW20 / Rd).